A 216-amino-acid chain; its full sequence is Chaperone protein TorD (216 aa).

The protein belongs to the TorD/DmsD family. TorD subfamily.

It localises to the cytoplasm. Functionally, involved in the biogenesis of TorA. Acts on TorA before the insertion of the molybdenum cofactor and, as a result, probably favors a conformation of the apoenzyme that is competent for acquiring the cofactor. This Photobacterium profundum (strain SS9) protein is Chaperone protein TorD.